Reading from the N-terminus, the 209-residue chain is Thymidylate kinase (209 aa).

Residue 10 to 17 (GLDGAGKS) coordinates ATP.

The protein belongs to the thymidylate kinase family.

The catalysed reaction is dTMP + ATP = dTDP + ADP. Phosphorylation of dTMP to form dTDP in both de novo and salvage pathways of dTTP synthesis. The sequence is that of Thymidylate kinase from Francisella tularensis subsp. tularensis (strain FSC 198).